Here is a 1422-residue protein sequence, read N- to C-terminus: FH1/FH2 domain-containing protein 3 (1422 aa).

The 394-residue stretch at 18 to 411 folds into the GBD/FH3 domain; it reads NSTNFPEPSR…NFGNNSYHSS (394 aa). Disordered stretches follow at residues 323–464, 521–666, 687–708, 754–781, 821–849, 1262–1305, 1320–1357, and 1374–1410; these read RHED…RRRQ, ACLA…GVNG, RKSP…QEAE, SGDL…VQPK, LGHR…PPLL, QQKQ…SYAE, SSPS…SPNV, and TQVP…EEAR. Ser345 carries the post-translational modification Phosphoserine. The segment covering 357-366 has biased composition (basic residues); the sequence is LDRRRSRRHS. Over residues 367–390 the composition is skewed to polar residues; that stretch reads VQSIKSTLSAPTSPCSQSAPSFKP. Ser375 carries the post-translational modification Phosphoserine. Over residues 410-430 the composition is skewed to low complexity; it reads SSRPSSGSSVPTTPTSSVSPP. Residues 438 to 449 show a composition bias toward polar residues; sequence SSPSGLLTSSFR. Residues 448 to 480 adopt a coiled-coil conformation; it reads FRQHQESLAAERERRRQEREERLQRIEREERNK. Basic and acidic residues predominate over residues 450–464; it reads QHQESLAAERERRRQ. Over residues 521–535 the composition is skewed to low complexity; the sequence is ACLAPLSHSPSSSDS. Residues 536-547 show a composition bias toward polar residues; the sequence is QEALTVSASSPG. 2 stretches are compositionally biased toward acidic residues: residues 559–569 and 592–603; these read PEPESEAEPEA and ETEVEQALEQEP. The span at 604-624 shows a compositional bias: basic and acidic residues; that stretch reads EERASLSEKERQNEGVNERDN. Residues 626–635 are compositionally biased toward low complexity; that stretch reads SASSVSSSSS. Over residues 637–651 the composition is skewed to basic and acidic residues; the sequence is LEREEKEDKLSRDRT. The residue at position 763 (Ser763) is a Phosphoserine. A Phosphothreonine modification is found at Thr775. A compositionally biased stretch (pro residues) spans 827–849; the sequence is PGPPPPPPPTFLGLPPPPPPPLL. An FH1 domain is found at 827 to 858; it reads PGPPPPPPPTFLGLPPPPPPPLLDSIPPPPVP. The 397-residue stretch at 883–1279 folds into the FH2 domain; the sequence is GQPTFTKKKK…HRERNKTRGK (397 aa). A compositionally biased stretch (basic residues) spans 1264-1278; it reads KQKRANHRERNKTRG. The DAD domain occupies 1359–1391; sequence DDAADEIMDRIVKSATQVPSQRVVPRERKRSRA. Residues 1385 to 1400 show a composition bias toward basic residues; the sequence is ERKRSRANRKSLRRTL.

The protein belongs to the formin homology family. In terms of assembly, interacts with nestin/NES-based interfilament (IF). Interacts with SQSTM1; isoform 4 threonine phosphorylation disrupts SQSTM1-binding. Phosphorylated on Thr-1474 and Thr-1476 by CK2. Expressed in the heart, kidney and brain. May be down-regulated in various types of heart diseases, including idiopathic dilated, ventricular dilated, familial dilated and perinatal dilated cardiomyopathies, as well as ischemic heart disease (at protein level).

It is found in the cytoplasm. It localises to the cytoskeleton. Its subcellular location is the myofibril. The protein resides in the sarcomere. The protein localises to the z line. Actin-organizing protein that may cause stress fiber formation together with cell elongation. Isoform 4 may play a role in actin filament polymerization in cardiomyocytes. The chain is FH1/FH2 domain-containing protein 3 (FHOD3) from Homo sapiens (Human).